The primary structure comprises 420 residues: Gamma-glutamyl phosphate reductase (420 aa).

It belongs to the gamma-glutamyl phosphate reductase family.

The protein resides in the cytoplasm. It catalyses the reaction L-glutamate 5-semialdehyde + phosphate + NADP(+) = L-glutamyl 5-phosphate + NADPH + H(+). It participates in amino-acid biosynthesis; L-proline biosynthesis; L-glutamate 5-semialdehyde from L-glutamate: step 2/2. Catalyzes the NADPH-dependent reduction of L-glutamate 5-phosphate into L-glutamate 5-semialdehyde and phosphate. The product spontaneously undergoes cyclization to form 1-pyrroline-5-carboxylate. The sequence is that of Gamma-glutamyl phosphate reductase from Streptococcus sanguinis (strain SK36).